A 156-amino-acid chain; its full sequence is Small ribosomal subunit protein uS7 (156 aa).

It belongs to the universal ribosomal protein uS7 family. Part of the 30S ribosomal subunit. Contacts proteins S9 and S11.

In terms of biological role, one of the primary rRNA binding proteins, it binds directly to 16S rRNA where it nucleates assembly of the head domain of the 30S subunit. Is located at the subunit interface close to the decoding center, probably blocks exit of the E-site tRNA. The chain is Small ribosomal subunit protein uS7 from Alcanivorax borkumensis (strain ATCC 700651 / DSM 11573 / NCIMB 13689 / SK2).